Consider the following 786-residue polypeptide: Endonuclease MutS2 (786 aa).

Gly332–Thr339 contributes to the ATP binding site. The Smr domain occupies Ile711–Lys786.

The protein belongs to the DNA mismatch repair MutS family. MutS2 subfamily. In terms of assembly, homodimer. Binds to stalled ribosomes, contacting rRNA.

Its function is as follows. Endonuclease that is involved in the suppression of homologous recombination and thus may have a key role in the control of bacterial genetic diversity. Functionally, acts as a ribosome collision sensor, splitting the ribosome into its 2 subunits. Detects stalled/collided 70S ribosomes which it binds and splits by an ATP-hydrolysis driven conformational change. Acts upstream of the ribosome quality control system (RQC), a ribosome-associated complex that mediates the extraction of incompletely synthesized nascent chains from stalled ribosomes and their subsequent degradation. Probably generates substrates for RQC. This Clostridium perfringens (strain ATCC 13124 / DSM 756 / JCM 1290 / NCIMB 6125 / NCTC 8237 / Type A) protein is Endonuclease MutS2.